We begin with the raw amino-acid sequence, 139 residues long: General odorant-binding protein 56a (139 aa).

Residues 1–19 form the signal peptide; it reads MNSYFVIALSALFVTLAVG. N-linked (GlcNAc...) asparagine glycosylation is present at asparagine 23. 3 disulfide bridges follow: cysteine 39/cysteine 71, cysteine 67/cysteine 118, and cysteine 109/cysteine 127.

Belongs to the PBP/GOBP family. Expressed in ventral pits of larvae. In adults, it is not specifically expressed in chemosensory organs. Also expressed in stalk cells at the proximal tip of the wing disk.

Its subcellular location is the secreted. Present in the aqueous fluid surrounding olfactory sensory dendrites and are thought to aid in the capture and transport of hydrophobic odorants into and through this fluid. The sequence is that of General odorant-binding protein 56a (Obp56a) from Drosophila melanogaster (Fruit fly).